We begin with the raw amino-acid sequence, 42 residues long: Delta-hexatoxin-Hv1b (42 aa).

4 cysteine pairs are disulfide-bonded: Cys1–Cys15, Cys8–Cys20, Cys14–Cys31, and Cys16–Cys42.

It belongs to the neurotoxin 06 (delta-actx) family. In terms of tissue distribution, expressed by the venom gland.

The protein resides in the secreted. Functionally, lethal neurotoxin. Slows the inactivation of tetrodotoxin-sensitive voltage-gated sodium channels (Nav) by binding to site 3 of the channel, resulting in repetitive firing in autonomic and motor nerve fibers. This is Delta-hexatoxin-Hv1b from Hadronyche versuta (Blue mountains funnel-web spider).